The following is a 367-amino-acid chain: tRNA-specific 2-thiouridylase MnmA (367 aa).

Residues 7–14 and methionine 33 each bind ATP; that span reads AMSGGVDS. Catalysis depends on cysteine 108, which acts as the Nucleophile. Cysteine 108 and cysteine 200 are disulfide-bonded. Glycine 132 provides a ligand contact to ATP. Residues 150–152 form an interaction with tRNA region; sequence KDQ. Residue cysteine 200 is the Cysteine persulfide intermediate of the active site. Residues 301–302 are interaction with tRNA; the sequence is RY.

It belongs to the MnmA/TRMU family.

Its subcellular location is the cytoplasm. It catalyses the reaction S-sulfanyl-L-cysteinyl-[protein] + uridine(34) in tRNA + AH2 + ATP = 2-thiouridine(34) in tRNA + L-cysteinyl-[protein] + A + AMP + diphosphate + H(+). Its function is as follows. Catalyzes the 2-thiolation of uridine at the wobble position (U34) of tRNA, leading to the formation of s(2)U34. This is tRNA-specific 2-thiouridylase MnmA from Thermus thermophilus (strain ATCC BAA-163 / DSM 7039 / HB27).